A 311-amino-acid polypeptide reads, in one-letter code: tRNA (cytosine(49)-C(5))-methyltransferase (311 aa).

S-adenosyl-L-methionine is bound by residues 118 to 124, Asp-142, Asp-169, and Asp-186; that span reads AAAPGSK. Cys-239 (nucleophile) is an active-site residue.

Belongs to the class I-like SAM-binding methyltransferase superfamily. RsmB/NOP family. In terms of assembly, forms a tripartite complex with archease and tRNA. Binds only the oligomeric forms of the archease.

Its subcellular location is the cytoplasm. It carries out the reaction cytidine(49) in tRNA precursor + S-adenosyl-L-methionine = 5-methylcytidine(49) in tRNA precursor + S-adenosyl-L-homocysteine + H(+). Its activity is regulated as follows. Substrate specificity and tendency to aggregate are influenced by archease. In terms of biological role, catalyzes AdoMet-dependent formation of m5C in tRNA. In the presence of protein archease, specifically methylates the cytosine at position 49 (m5C49) of tRNA. In the absence of archease, catalyzes the formation of m5C at many locations in tRNAs or rRNAs. This chain is tRNA (cytosine(49)-C(5))-methyltransferase, found in Pyrococcus abyssi (strain GE5 / Orsay).